We begin with the raw amino-acid sequence, 110 residues long: UPF0060 membrane protein RSp1275 (110 aa).

4 helical membrane-spanning segments follow: residues 8 to 28 (FLFA…WLVL), 33 to 53 (SAWL…LLTL), 63 to 83 (AAYG…VDGA), and 90 to 110 (IGGA…PQPT).

Belongs to the UPF0060 family.

Its subcellular location is the cell inner membrane. In Ralstonia nicotianae (strain ATCC BAA-1114 / GMI1000) (Ralstonia solanacearum), this protein is UPF0060 membrane protein RSp1275.